A 151-amino-acid chain; its full sequence is Probable cGMP 3',5'-cyclic phosphodiesterase subunit delta (151 aa).

The protein belongs to the PDE6D/unc-119 family. Interacts with Pde6.

The protein resides in the nucleus. Its subcellular location is the cytoplasm. The sequence is that of Probable cGMP 3',5'-cyclic phosphodiesterase subunit delta from Anopheles gambiae (African malaria mosquito).